We begin with the raw amino-acid sequence, 455 residues long: ATP-dependent protease ATPase subunit HslU (455 aa).

Residues Ile19 and 61 to 66 each bind ATP; that span reads GVGKTE. The tract at residues 144-163 is disordered; the sequence is ESKVGFANEPAEDAASKKEK. 3 residues coordinate ATP: Asp268, Glu333, and Arg405.

Belongs to the ClpX chaperone family. HslU subfamily. In terms of assembly, a double ring-shaped homohexamer of HslV is capped on each side by a ring-shaped HslU homohexamer. The assembly of the HslU/HslV complex is dependent on binding of ATP.

The protein resides in the cytoplasm. ATPase subunit of a proteasome-like degradation complex; this subunit has chaperone activity. The binding of ATP and its subsequent hydrolysis by HslU are essential for unfolding of protein substrates subsequently hydrolyzed by HslV. HslU recognizes the N-terminal part of its protein substrates and unfolds these before they are guided to HslV for hydrolysis. This chain is ATP-dependent protease ATPase subunit HslU, found in Francisella tularensis subsp. novicida (strain U112).